The primary structure comprises 229 residues: Cytochrome c oxidase assembly factor 7 (229 aa).

5 Sel1-like repeats span residues 34–66, 68–104, 108–145, 146–182, and 183–218; these read PEGC…EVNA, AQSC…NTQG, VDAC…EGGF, APSC…DLGH, and VWGC…DLHG. A disordered region spans residues 197 to 229; the sequence is DGTDKDEQRAEELKNRAKDLHGQEKERQLKFGE.

Belongs to the hcp beta-lactamase family.

It localises to the mitochondrion intermembrane space. In terms of biological role, may be required for assembly of mitochondrial respiratory chain complexes. This is Cytochrome c oxidase assembly factor 7 (coa7) from Danio rerio (Zebrafish).